We begin with the raw amino-acid sequence, 415 residues long: N-succinylarginine dihydrolase (415 aa).

Substrate contacts are provided by residues 18-27 (AGLSRGNIAS), N100, and 127-128 (HR). Residue E161 is part of the active site. Residue R193 participates in substrate binding. Residue H229 is part of the active site. 2 residues coordinate substrate: D231 and N340. The Nucleophile role is filled by C346.

This sequence belongs to the succinylarginine dihydrolase family. In terms of assembly, homodimer.

The catalysed reaction is N(2)-succinyl-L-arginine + 2 H2O + 2 H(+) = N(2)-succinyl-L-ornithine + 2 NH4(+) + CO2. It participates in amino-acid degradation; L-arginine degradation via AST pathway; L-glutamate and succinate from L-arginine: step 2/5. Its function is as follows. Catalyzes the hydrolysis of N(2)-succinylarginine into N(2)-succinylornithine, ammonia and CO(2). This Sphingopyxis alaskensis (strain DSM 13593 / LMG 18877 / RB2256) (Sphingomonas alaskensis) protein is N-succinylarginine dihydrolase.